Here is a 648-residue protein sequence, read N- to C-terminus: Serine/arginine repetitive matrix protein 3 (648 aa).

Residues 1–44 (MSSTVNNGATGMPAPPDAANGFPQPGASSGSWPRAEEELRAAEP) are disordered. The 44-residue stretch at 55-98 (LDHERKRRVELKCMELQEMMEEQGYSEEEIRQKVGTFRQMLMEK) folds into the CWF21 domain. Positions 99–109 (EGVLTREDRPG) are enriched in basic and acidic residues. Disordered regions lie at residues 99-139 (EGVL…DGPV) and 154-648 (YRTK…SGGF). Composition is skewed to basic residues over residues 168–186 (PKKK…KKRR), 199–211 (LRKK…KHRR), and 219–243 (RRKR…RKRP). Low complexity-rich tracts occupy residues 257-276 (SASS…GSPS) and 289-317 (TGSQ…NGGS). Residues 381–409 (ARRRRRRRRRRRSRSSANAPRRRGRRRTK) are compositionally biased toward basic residues. 3 stretches are compositionally biased toward low complexity: residues 414–428 (RGSS…SSSD), 461–471 (RPASTSPSPGT), and 493–502 (SWSSSRSPSK). Over residues 525-544 (LGRDKDSEGRARHAEAEAAR) the composition is skewed to basic and acidic residues. Positions 545-560 (TRRRSRSYSPIRKRRR) are enriched in basic residues. A compositionally biased stretch (low complexity) spans 579 to 648 (IPYYRPSPSS…SRSSSESGGF (70 aa)).

The protein belongs to the CWC21 family.

In terms of biological role, may play a role in regulating breast cancer cell invasiveness. May be involved in RYBP-mediated breast cancer progression. The sequence is that of Serine/arginine repetitive matrix protein 3 (Srrm3) from Mus musculus (Mouse).